Here is a 149-residue protein sequence, read N- to C-terminus: 2S seed storage albumin protein (149 aa).

The first 22 residues, 1-22 (MKLFIILATATLLIAATQAKYL), serve as a signal peptide directing secretion. 4 cysteine pairs are disulfide-bonded: C38–C98, C52–C87, C88–C133, and C100–C140. No IgE-binding stretches follow at residues 41–53 (QVKM…VKCN), 68–81 (ALSR…ESEE), 84–95 (LRGCCVAMKEME), and 97–105 (ECVCEWMKM). The tract at residues 108-117 (ENQKGRIGET) is igE-binding. Residues 121 to 131 (KGIRDLKELPN) are no IgE-binding. The tract at residues 132–141 (KCGISEMECH) is igE-binding.

It belongs to the 2S seed storage albumins family. Expressed in seeds (at protein level). Expressed in seeds.

Its function is as follows. Seed storage protein. The sequence is that of 2S seed storage albumin protein from Fagopyrum tataricum (Tartarian buckwheat).